The primary structure comprises 571 residues: Proline--tRNA ligase (571 aa).

This sequence belongs to the class-II aminoacyl-tRNA synthetase family. ProS type 1 subfamily. As to quaternary structure, homodimer.

The protein resides in the cytoplasm. The enzyme catalyses tRNA(Pro) + L-proline + ATP = L-prolyl-tRNA(Pro) + AMP + diphosphate. Catalyzes the attachment of proline to tRNA(Pro) in a two-step reaction: proline is first activated by ATP to form Pro-AMP and then transferred to the acceptor end of tRNA(Pro). As ProRS can inadvertently accommodate and process non-cognate amino acids such as alanine and cysteine, to avoid such errors it has two additional distinct editing activities against alanine. One activity is designated as 'pretransfer' editing and involves the tRNA(Pro)-independent hydrolysis of activated Ala-AMP. The other activity is designated 'posttransfer' editing and involves deacylation of mischarged Ala-tRNA(Pro). The misacylated Cys-tRNA(Pro) is not edited by ProRS. In Actinobacillus pleuropneumoniae serotype 3 (strain JL03), this protein is Proline--tRNA ligase.